We begin with the raw amino-acid sequence, 200 residues long: Type 1 fimbriae regulatory protein FimB (200 aa).

The Tyr recombinase domain occupies 8-189; it reads KKRNFLTHSE…NAGRFYGIWD (182 aa). Active-site residues include Arg-47, Lys-72, His-141, Arg-144, and His-167. The active-site O-(3'-phospho-DNA)-tyrosine intermediate is the Tyr-176.

Belongs to the 'phage' integrase family.

FimB is one of the 2 regulatory proteins which control the phase variation of type 1 fimbriae in E.coli. These proteins mediate the periodic inversion of a 300bp DNA segment that harbors the promoter for the fimbrial structural gene, fimA. FimB switches fimA on. This chain is Type 1 fimbriae regulatory protein FimB (fimB), found in Escherichia coli O157:H7.